The sequence spans 56 residues: Small ribosomal subunit protein uS14 (56 aa).

Zn(2+)-binding residues include Cys-21, Cys-24, Cys-39, and Cys-42.

It belongs to the universal ribosomal protein uS14 family. It depends on Zn(2+) as a cofactor.

This chain is Small ribosomal subunit protein uS14 (RPS29), found in Griffithsia japonica (Red alga).